Consider the following 309-residue polypeptide: Probable manganese-dependent inorganic pyrophosphatase (309 aa).

Histidine 9, aspartate 13, aspartate 15, aspartate 75, histidine 97, and aspartate 149 together coordinate Mn(2+).

It belongs to the PPase class C family. Mn(2+) serves as cofactor.

It localises to the cytoplasm. It catalyses the reaction diphosphate + H2O = 2 phosphate + H(+). The chain is Probable manganese-dependent inorganic pyrophosphatase from Lactiplantibacillus plantarum (strain ATCC BAA-793 / NCIMB 8826 / WCFS1) (Lactobacillus plantarum).